The following is a 38-amino-acid chain: Large ribosomal subunit protein bL36B (38 aa).

Belongs to the bacterial ribosomal protein bL36 family.

This Prochlorococcus marinus (strain MIT 9515) protein is Large ribosomal subunit protein bL36B.